Here is a 114-residue protein sequence, read N- to C-terminus: Phosphoribosyl-ATP pyrophosphatase (114 aa).

The protein belongs to the PRA-PH family.

It localises to the cytoplasm. The enzyme catalyses 1-(5-phospho-beta-D-ribosyl)-ATP + H2O = 1-(5-phospho-beta-D-ribosyl)-5'-AMP + diphosphate + H(+). The protein operates within amino-acid biosynthesis; L-histidine biosynthesis; L-histidine from 5-phospho-alpha-D-ribose 1-diphosphate: step 2/9. The protein is Phosphoribosyl-ATP pyrophosphatase of Leuconostoc mesenteroides subsp. mesenteroides (strain ATCC 8293 / DSM 20343 / BCRC 11652 / CCM 1803 / JCM 6124 / NCDO 523 / NBRC 100496 / NCIMB 8023 / NCTC 12954 / NRRL B-1118 / 37Y).